Reading from the N-terminus, the 240-residue chain is Probable Ni/Fe-hydrogenase B-type cytochrome subunit (240 aa).

Transmembrane regions (helical) follow at residues 31 to 51 (LWHW…YFIG), 75 to 95 (FAAG…AFVG), 142 to 163 (LAMF…FALY), and 196 to 213 (LGMW…YLAV).

Belongs to the HupC/HyaC/HydC family.

The protein resides in the cell membrane. Probable b-type cytochrome. In Azotobacter vinelandii, this protein is Probable Ni/Fe-hydrogenase B-type cytochrome subunit (hoxZ).